We begin with the raw amino-acid sequence, 225 residues long: N-(5'-phosphoribosyl)anthranilate isomerase (225 aa).

It belongs to the TrpF family.

The enzyme catalyses N-(5-phospho-beta-D-ribosyl)anthranilate = 1-(2-carboxyphenylamino)-1-deoxy-D-ribulose 5-phosphate. The protein operates within amino-acid biosynthesis; L-tryptophan biosynthesis; L-tryptophan from chorismate: step 3/5. This chain is N-(5'-phosphoribosyl)anthranilate isomerase, found in Nitrobacter winogradskyi (strain ATCC 25391 / DSM 10237 / CIP 104748 / NCIMB 11846 / Nb-255).